The sequence spans 137 residues: Nucleoside diphosphate kinase (137 aa).

The ATP site is built by K10, F58, R86, T92, R103, and N113. Residue H116 is the Pros-phosphohistidine intermediate of the active site.

It belongs to the NDK family. In terms of assembly, homotetramer. Requires Mg(2+) as cofactor.

The protein resides in the cytoplasm. The enzyme catalyses a 2'-deoxyribonucleoside 5'-diphosphate + ATP = a 2'-deoxyribonucleoside 5'-triphosphate + ADP. It carries out the reaction a ribonucleoside 5'-diphosphate + ATP = a ribonucleoside 5'-triphosphate + ADP. Functionally, major role in the synthesis of nucleoside triphosphates other than ATP. The ATP gamma phosphate is transferred to the NDP beta phosphate via a ping-pong mechanism, using a phosphorylated active-site intermediate. This Helicobacter pylori (strain P12) protein is Nucleoside diphosphate kinase.